The primary structure comprises 342 residues: MTETIKTDVLIVGAGPCGLFAVFELGLLDVKAHLVDILDKVGGQCAELYPEKPIYDIPGIPMVTGHGLTEALMEQIKPFNPTFHLSEMVENVEKIGDPGFRVTTNAGKVFECTVLVVAAGGGSFLPKRPPVPGVEAYEGTSVHYAVRKMEDFRGKDILIVGGGDSALDWTLNLNPIAKSMTLVHRRDDFRGAPHSVEQMRQLVASGKLDLKIGQITELQGDNGQLTGATVKLNDNTTSQIKCDAMLPFFGLTMKLGPVANWGLDLENNLIPVDTGTFETNVPGIFAIGDINTYPGKLKLILSGFHEGALMAQKAVKYVYPDKRVVFQYTTSSTNLQKKLGVN.

C17, D36, Q44, Y49, V89, F124, D289, and T330 together coordinate FAD.

This sequence belongs to the ferredoxin--NADP reductase type 2 family. As to quaternary structure, homodimer. FAD serves as cofactor.

The catalysed reaction is 2 reduced [2Fe-2S]-[ferredoxin] + NADP(+) + H(+) = 2 oxidized [2Fe-2S]-[ferredoxin] + NADPH. This is Ferredoxin--NADP reductase from Rhodopseudomonas palustris (strain ATCC BAA-98 / CGA009).